Consider the following 215-residue polypeptide: MRAVIPYKNENAKSRLSPILSKKDREEFVELMLKDVIKALDDAEVVNIDILTTSAEGIPNDFNGNVTITEPGLNDSINEYLQNANEPILIIMADLPLVTGDHIRKIISFSEDVVIVPGKGGGTNILFIRHPNEFTVKYHDCSFISHCEITDELDKSMHIFDSFLASTDIDEPHDIVELMLHGKGQAKEYAEKRFGSETGKGRVKISHLSKLSGFV.

It belongs to the CofC family. Homodimer.

The enzyme catalyses (2S)-2-phospholactate + GTP + H(+) = (2S)-lactyl-2-diphospho-5'-guanosine + diphosphate. It functions in the pathway cofactor biosynthesis; coenzyme F420 biosynthesis. Guanylyltransferase that catalyzes the activation of (2S)-2-phospholactate (2-PL) as (2S)-lactyl-2-diphospho-5'-guanosine, via the condensation of 2-PL with GTP. It is involved in the biosynthesis of coenzyme F420, a hydride carrier cofactor. In Methanococcoides burtonii (strain DSM 6242 / NBRC 107633 / OCM 468 / ACE-M), this protein is 2-phospho-L-lactate guanylyltransferase.